The chain runs to 122 residues: Large ribosomal subunit protein uL14 (122 aa).

It belongs to the universal ribosomal protein uL14 family. As to quaternary structure, part of the 50S ribosomal subunit. Forms a cluster with proteins L3 and L19. In the 70S ribosome, L14 and L19 interact and together make contacts with the 16S rRNA in bridges B5 and B8.

Its function is as follows. Binds to 23S rRNA. Forms part of two intersubunit bridges in the 70S ribosome. The protein is Large ribosomal subunit protein uL14 of Gluconobacter oxydans (strain 621H) (Gluconobacter suboxydans).